The following is a 468-amino-acid chain: Probable Xaa-Pro aminopeptidase PEPP (468 aa).

Mn(2+) contacts are provided by D264, D275, E398, and E438.

Belongs to the peptidase M24B family. It depends on Mn(2+) as a cofactor.

The enzyme catalyses Release of any N-terminal amino acid, including proline, that is linked to proline, even from a dipeptide or tripeptide.. In terms of biological role, catalyzes the removal of a penultimate prolyl residue from the N-termini of peptides. The polypeptide is Probable Xaa-Pro aminopeptidase PEPP (PEPP) (Paracoccidioides brasiliensis (strain Pb18)).